Here is a 447-residue protein sequence, read N- to C-terminus: Methionine aminopeptidase 2-2 (447 aa).

A disordered region spans residues M1–P89. The span at N15 to G30 shows a compositional bias: polar residues. Residues D34 to D47 show a composition bias toward acidic residues. The span at K59–A73 shows a compositional bias: basic residues. H197 lines the substrate pocket. D217, D228, and H297 together coordinate a divalent metal cation. A substrate-binding site is contributed by H305. 2 residues coordinate a divalent metal cation: E333 and E428.

This sequence belongs to the peptidase M24A family. Methionine aminopeptidase eukaryotic type 2 subfamily. Co(2+) serves as cofactor. It depends on Zn(2+) as a cofactor. Requires Mn(2+) as cofactor. Fe(2+) is required as a cofactor.

The protein resides in the cytoplasm. The catalysed reaction is Release of N-terminal amino acids, preferentially methionine, from peptides and arylamides.. Cotranslationally removes the N-terminal methionine from nascent proteins. The N-terminal methionine is often cleaved when the second residue in the primary sequence is small and uncharged (Met-Ala-, Cys, Gly, Pro, Ser, Thr, or Val). This Arthroderma otae (strain ATCC MYA-4605 / CBS 113480) (Microsporum canis) protein is Methionine aminopeptidase 2-2.